The following is a 407-amino-acid chain: Probable NADPH dehydrogenase (407 aa).

FMN is bound by residues Thr49 and Gln124. Tyr206 functions as the Proton donor in the catalytic mechanism. Arg254 and Arg357 together coordinate FMN.

This sequence belongs to the NADH:flavin oxidoreductase/NADH oxidase family. Requires FMN as cofactor.

It carries out the reaction A + NADPH + H(+) = AH2 + NADP(+). In terms of biological role, oxidoreductase that binds mammalian estrogens with high affinity. This chain is Probable NADPH dehydrogenase, found in Candida albicans (strain SC5314 / ATCC MYA-2876) (Yeast).